We begin with the raw amino-acid sequence, 216 residues long: Ras-related protein Rab-11A (216 aa).

Gly-2 carries the N-acetylglycine modification. GTP contacts are provided by Ser-20, Gly-21, Val-22, Gly-23, Lys-24, Ser-25, Asn-26, Asn-37, Leu-38, Ser-40, Ser-42, and Thr-43. Ser-25 lines the Mg(2+) pocket. The short motif at 36-47 (FNLESKSTIGVE) is the Switch 1 element. Residues Thr-43 and Asp-66 each contribute to the Mg(2+) site. A Switch 2 motif is present at residues 67–86 (TAGQERYRAITSAYYRGAVG). Gly-69, Asn-124, Lys-125, Asp-127, Ala-155, and Leu-156 together coordinate GTP. The tract at residues 183–208 (DRRENDMSPSNNVVPIHVPPTTENKP) is disordered. Residues Cys-212 and Cys-213 are each lipidated (S-geranylgeranyl cysteine). Cys-213 is modified (cysteine methyl ester). The propeptide at 214–216 (QNI) is removed in mature form.

This sequence belongs to the small GTPase superfamily. Rab family. Requires Mg(2+) as cofactor.

The protein localises to the cell membrane. It localises to the endosome membrane. The protein resides in the recycling endosome membrane. Its subcellular location is the cleavage furrow. It is found in the cytoplasmic vesicle. The protein localises to the phagosome. It localises to the cytoplasmic vesicle membrane. The protein resides in the golgi apparatus. Its subcellular location is the trans-Golgi network. The enzyme catalyses GTP + H2O = GDP + phosphate + H(+). Regulated by guanine nucleotide exchange factors (GEFs) which promote the exchange of bound GDP for free GTP. Regulated by GTPase activating proteins (GAPs) which increase the GTP hydrolysis activity. Inhibited by GDP dissociation inhibitors (GDIs) which prevent Rab-GDP dissociation. Functionally, the small GTPases Rab are key regulators of intracellular membrane trafficking, from the formation of transport vesicles to their fusion with membranes. Rabs cycle between an inactive GDP-bound form and an active GTP-bound form that is able to recruit to membranes different set of downstream effectors directly responsible for vesicle formation, movement, tethering and fusion. The small Rab GTPase RAB11A regulates endocytic recycling. May also be involved in the regulation of preciliary trafficking and neosynthesized protein export. This Gallus gallus (Chicken) protein is Ras-related protein Rab-11A (RAB11A).